Consider the following 455-residue polypeptide: Fumarate hydratase class II (455 aa).

Substrate-binding positions include 96–98 (SGT), 122–125 (HPND), 132–134 (SSN), and Thr180. His181 acts as the Proton donor/acceptor in catalysis. Residue Ser311 is part of the active site. Substrate-binding positions include Ser312 and 317-319 (KVN).

It belongs to the class-II fumarase/aspartase family. Fumarase subfamily. As to quaternary structure, homotetramer.

The protein resides in the cytoplasm. It catalyses the reaction (S)-malate = fumarate + H2O. It functions in the pathway carbohydrate metabolism; tricarboxylic acid cycle; (S)-malate from fumarate: step 1/1. In terms of biological role, involved in the TCA cycle. Catalyzes the stereospecific interconversion of fumarate to L-malate. This is Fumarate hydratase class II from Listeria monocytogenes serotype 4b (strain F2365).